The sequence spans 119 residues: Large ribosomal subunit protein bL20 (119 aa).

This sequence belongs to the bacterial ribosomal protein bL20 family.

Functionally, binds directly to 23S ribosomal RNA and is necessary for the in vitro assembly process of the 50S ribosomal subunit. It is not involved in the protein synthesizing functions of that subunit. The protein is Large ribosomal subunit protein bL20 of Rhodospirillum centenum (strain ATCC 51521 / SW).